Reading from the N-terminus, the 85-residue chain is Photosystem I reaction center subunit PsaK (85 aa).

Transmembrane regions (helical) follow at residues 12 to 34 (TVTW…IAVG) and 54 to 76 (GGMG…IGAI).

It belongs to the PsaG/PsaK family.

It localises to the cellular thylakoid membrane. In Parasynechococcus marenigrum (strain WH8102), this protein is Photosystem I reaction center subunit PsaK.